The chain runs to 245 residues: Ribonuclease PH (245 aa).

Residues Arg-87 and 125 to 127 (GTR) contribute to the phosphate site.

The protein belongs to the RNase PH family. As to quaternary structure, homohexameric ring arranged as a trimer of dimers.

The enzyme catalyses tRNA(n+1) + phosphate = tRNA(n) + a ribonucleoside 5'-diphosphate. Functionally, phosphorolytic 3'-5' exoribonuclease that plays an important role in tRNA 3'-end maturation. Removes nucleotide residues following the 3'-CCA terminus of tRNAs; can also add nucleotides to the ends of RNA molecules by using nucleoside diphosphates as substrates, but this may not be physiologically important. Probably plays a role in initiation of 16S rRNA degradation (leading to ribosome degradation) during starvation. In Streptomyces griseus subsp. griseus (strain JCM 4626 / CBS 651.72 / NBRC 13350 / KCC S-0626 / ISP 5235), this protein is Ribonuclease PH.